The following is a 76-amino-acid chain: Small ribosomal subunit protein bS18 (76 aa).

It belongs to the bacterial ribosomal protein bS18 family. In terms of assembly, part of the 30S ribosomal subunit. Forms a tight heterodimer with protein bS6.

In terms of biological role, binds as a heterodimer with protein bS6 to the central domain of the 16S rRNA, where it helps stabilize the platform of the 30S subunit. This is Small ribosomal subunit protein bS18 from Aeromonas hydrophila subsp. hydrophila (strain ATCC 7966 / DSM 30187 / BCRC 13018 / CCUG 14551 / JCM 1027 / KCTC 2358 / NCIMB 9240 / NCTC 8049).